The chain runs to 354 residues: Rhodopsin (354 aa).

Topologically, residues 1–36 (MNGTEGENFYVPMSNKTGVVRNPFEYPQYYLADHWM) are extracellular. 2 N-linked (GlcNAc...) asparagine glycosylation sites follow: Asn2 and Asn15. Residues 37–61 (FAVLAAYMFFLIITGFPVNFLTLFV) form a helical membrane-spanning segment. Residues 62–73 (TIQNKKLRQPLN) are Cytoplasmic-facing. The chain crosses the membrane as a helical span at residues 74 to 96 (YILLNLAVANLFMVFGGFTTTLI). At 97 to 110 (TSMNGYFVFGSTGC) the chain is on the extracellular side. An intrachain disulfide couples Cys110 to Cys187. Residues 111-133 (NLEGFFATLGGEISLWSLVVLAI) traverse the membrane as a helical segment. A 'Ionic lock' involved in activated form stabilization motif is present at residues 134–136 (ERY). The Cytoplasmic portion of the chain corresponds to 134 to 152 (ERYVVVCKPMSNFRFGSQH). The chain crosses the membrane as a helical span at residues 153-173 (AIAGVSLTWVMAMACAAPPLV). At 174 to 202 (GWSRYIPEGLQCSCGIDYYTPKPEINNVS) the chain is on the extracellular side. Residue Asn200 is glycosylated (N-linked (GlcNAc...) asparagine). The chain crosses the membrane as a helical span at residues 203–224 (FVIYMFVVHFSIPLTIIFFCYG). Over 225-252 (RLVCTVKAAAAQQQESETTQRAEREVTR) the chain is Cytoplasmic. A helical membrane pass occupies residues 253–274 (MVVIMVIGFLICWLPYASVALY). Residues 275–286 (IFNNQGSEFGPV) lie on the Extracellular side of the membrane. A helical membrane pass occupies residues 287–308 (FMTIPSFFAKSSALYNPLIYIL). An N6-(retinylidene)lysine modification is found at Lys296. At 309–354 (MNKQFRNCMITTLCCGKNPFEEEESTSASASKTEASSVSSSQVSPA) the chain is on the cytoplasmic side. Residues Cys322 and Cys323 are each lipidated (S-palmitoyl cysteine). Positions 333-354 (STSASASKTEASSVSSSQVSPA) are disordered. Residues 334-354 (TSASASKTEASSVSSSQVSPA) are compositionally biased toward low complexity.

Belongs to the G-protein coupled receptor 1 family. Opsin subfamily. In terms of processing, phosphorylated on some or all of the serine and threonine residues present in the C-terminal region. Post-translationally, contains one covalently linked retinal chromophore.

It is found in the membrane. Its subcellular location is the cell projection. It localises to the cilium. The protein resides in the photoreceptor outer segment. Its function is as follows. Photoreceptor required for image-forming vision at low light intensity. While most salt water fish species use retinal as chromophore, most freshwater fish use 3-dehydroretinal, or a mixture of retinal and 3-dehydroretinal. Light-induced isomerization of 11-cis to all-trans retinal triggers a conformational change that activates signaling via G-proteins. Subsequent receptor phosphorylation mediates displacement of the bound G-protein alpha subunit by arrestin and terminates signaling. In Galeus melastomus (Blackmouth catshark), this protein is Rhodopsin (rho).